The following is a 177-amino-acid chain: ATP-dependent protease subunit HslV (177 aa).

T5 is a catalytic residue. G161, C164, and T167 together coordinate Na(+).

The protein belongs to the peptidase T1B family. HslV subfamily. As to quaternary structure, a double ring-shaped homohexamer of HslV is capped on each side by a ring-shaped HslU homohexamer. The assembly of the HslU/HslV complex is dependent on binding of ATP.

It is found in the cytoplasm. The enzyme catalyses ATP-dependent cleavage of peptide bonds with broad specificity.. Allosterically activated by HslU binding. Functionally, protease subunit of a proteasome-like degradation complex believed to be a general protein degrading machinery. This is ATP-dependent protease subunit HslV from Campylobacter concisus (strain 13826).